The primary structure comprises 139 residues: Ribosome-binding factor A (139 aa).

A disordered region spans residues 120–139 (PENLLAVEDNTDEDDESFSE). Acidic residues predominate over residues 128 to 139 (DNTDEDDESFSE).

This sequence belongs to the RbfA family. In terms of assembly, monomer. Binds 30S ribosomal subunits, but not 50S ribosomal subunits or 70S ribosomes.

It localises to the cytoplasm. In terms of biological role, one of several proteins that assist in the late maturation steps of the functional core of the 30S ribosomal subunit. Associates with free 30S ribosomal subunits (but not with 30S subunits that are part of 70S ribosomes or polysomes). Required for efficient processing of 16S rRNA. May interact with the 5'-terminal helix region of 16S rRNA. The polypeptide is Ribosome-binding factor A (Nostoc punctiforme (strain ATCC 29133 / PCC 73102)).